Here is a 627-residue protein sequence, read N- to C-terminus: MTSQYAAELCALLVEDNFGELFARIFSTLQRYDRLSLPRLKFYSRLSDRQLRHGLSAMIQHHLVYHYTSYDDGVTYYEPNLQAAYYLVRSGKILEFIEERLGKYAATLMETIMFLGHAQVGYLETLPELQPAPPKANGVKQEAEGGESEEQMNGDDVHTSDQPALLHPTLKALASHGYIFRVRDAQFQSYADNALDAERAIKSRPDVKQLKGKKLDETVLEGTVTLLKERLDGDLTRGLMHNGLPRGAKRRHGTGSADATNKKARMDYVDADEDEDEEENEWSDDEMGGDTTPMELAIVVRVNYEKLDVALRNRRFLDLAEMNSSPVTAQVYEGLLRRIEYQTKQCRDSAEIPREGEEGEQYSVPIALSAVTEEVDPQLDLAGSIGPMEISQAINKRGKRPLEDSVNGTDREGSEAPSRTYEVDQHLSLLSQPPYNLTSKRVLSGLITWTVEFRHLARKLRHLELERMIEARYGDVALRVIRVLHAKGKLDEKRLQEISLLPFKDLRQVLASMQSGGFVDLQEVPRDAQRQPSRTIYLWYYDPDRIRSSILEDTYKAMSRCMQRLRFERNRLKEFLEKTERSDVKGNEERYLSQAELTLLEQWKAKEALLLGEVARLDEMVAVMRDY.

3 disordered regions span residues 131–162 (PAPP…TSDQ), 238–291 (GLMH…GGDT), and 394–420 (INKR…PSRT). 2 stretches are compositionally biased toward acidic residues: residues 144 to 153 (EGGESEEQMN) and 269 to 288 (VDAD…DEMG). The interval 554-575 (TYKAMSRCMQRLRFERNRLKEF) is leucine-zipper.

The protein belongs to the RNA polymerase beta chain family. As to quaternary structure, component of the RNA polymerase III (Pol III) complex consisting of 17 subunits.

The protein resides in the nucleus. Its function is as follows. DNA-dependent RNA polymerase catalyzes the transcription of DNA into RNA using the four ribonucleoside triphosphates as substrates. Specific core component of RNA polymerase III which synthesizes small RNAs, such as 5S rRNA and tRNAs. The protein is DNA-directed RNA polymerase III subunit rpc3 (rpc82) of Aspergillus niger (strain ATCC MYA-4892 / CBS 513.88 / FGSC A1513).